Here is a 225-residue protein sequence, read N- to C-terminus: NAD(P)H-quinone oxidoreductase subunit K, chloroplastic (225 aa).

Residues cysteine 43, cysteine 44, cysteine 108, and cysteine 139 each coordinate [4Fe-4S] cluster.

It belongs to the complex I 20 kDa subunit family. As to quaternary structure, NDH is composed of at least 16 different subunits, 5 of which are encoded in the nucleus. It depends on [4Fe-4S] cluster as a cofactor.

It localises to the plastid. Its subcellular location is the chloroplast thylakoid membrane. The enzyme catalyses a plastoquinone + NADH + (n+1) H(+)(in) = a plastoquinol + NAD(+) + n H(+)(out). The catalysed reaction is a plastoquinone + NADPH + (n+1) H(+)(in) = a plastoquinol + NADP(+) + n H(+)(out). Functionally, NDH shuttles electrons from NAD(P)H:plastoquinone, via FMN and iron-sulfur (Fe-S) centers, to quinones in the photosynthetic chain and possibly in a chloroplast respiratory chain. The immediate electron acceptor for the enzyme in this species is believed to be plastoquinone. Couples the redox reaction to proton translocation, and thus conserves the redox energy in a proton gradient. This is NAD(P)H-quinone oxidoreductase subunit K, chloroplastic from Nuphar advena (Common spatterdock).